The following is a 130-amino-acid chain: Small ribosomal subunit protein uS11c (130 aa).

This sequence belongs to the universal ribosomal protein uS11 family. Part of the 30S ribosomal subunit.

It is found in the plastid. The protein resides in the chloroplast. The protein is Small ribosomal subunit protein uS11c of Pyropia yezoensis (Susabi-nori).